The primary structure comprises 414 residues: Eukaryotic initiation factor 4A-3 (414 aa).

A2 bears the N-acetylalanine mark. The short motif at 41–69 (DSFDAMELQPDLLRGIYAYGFEKPSAIQQ) is the Q motif element. Residues 72–242 (IIPFCKGLDV…RKFMNKPVRI (171 aa)) enclose the Helicase ATP-binding domain. 85 to 92 (AQSGTGKT) is an ATP binding site. S106 bears the Phosphoserine mark. The residue at position 147 (T147) is a Phosphothreonine. Residues 190–193 (DEAD) carry the DEAD box motif. One can recognise a Helicase C-terminal domain in the interval 253 to 414 (GIKQFYVNVD…ELPSNVADLL (162 aa)).

Belongs to the DEAD box helicase family. eIF4A subfamily. In terms of assembly, eIF4F is a multi-subunit complex, the composition of which varies with external and internal environmental conditions. It is composed of at least EIF4A, EIF4E and EIF4G.

The protein resides in the cytoplasm. The enzyme catalyses ATP + H2O = ADP + phosphate + H(+). In terms of biological role, ATP-dependent RNA helicase which is a subunit of the eIF4F complex involved in cap recognition and is required for mRNA binding to ribosome. In the current model of translation initiation, eIF4A unwinds RNA secondary structures in the 5'-UTR of mRNAs which is necessary to allow efficient binding of the small ribosomal subunit, and subsequent scanning for the initiator codon. The sequence is that of Eukaryotic initiation factor 4A-3 (TIF4A-3) from Arabidopsis thaliana (Mouse-ear cress).